Consider the following 230-residue polypeptide: ATP-dependent dethiobiotin synthetase BioD (230 aa).

12 to 17 (DIGKTH) is a binding site for ATP. Threonine 16 provides a ligand contact to Mg(2+). Lysine 37 is an active-site residue. Serine 41 provides a ligand contact to substrate. Residues aspartate 52, 115-118 (EGAG), and 175-176 (SE) each bind ATP. Mg(2+)-binding residues include aspartate 52 and glutamate 115.

The protein belongs to the dethiobiotin synthetase family. Homodimer. The cofactor is Mg(2+).

It localises to the cytoplasm. The catalysed reaction is (7R,8S)-7,8-diammoniononanoate + CO2 + ATP = (4R,5S)-dethiobiotin + ADP + phosphate + 3 H(+). It functions in the pathway cofactor biosynthesis; biotin biosynthesis; biotin from 7,8-diaminononanoate: step 1/2. Functionally, catalyzes a mechanistically unusual reaction, the ATP-dependent insertion of CO2 between the N7 and N8 nitrogen atoms of 7,8-diaminopelargonic acid (DAPA, also called 7,8-diammoniononanoate) to form a ureido ring. The sequence is that of ATP-dependent dethiobiotin synthetase BioD from Caulobacter sp. (strain K31).